Reading from the N-terminus, the 408-residue chain is Peptidase T (408 aa).

A Zn(2+)-binding site is contributed by H78. D80 is a catalytic residue. Residue D141 participates in Zn(2+) binding. Catalysis depends on E175, which acts as the Proton acceptor. Residues E176, D198, and H380 each contribute to the Zn(2+) site.

Belongs to the peptidase M20B family. Zn(2+) serves as cofactor.

It localises to the cytoplasm. The enzyme catalyses Release of the N-terminal residue from a tripeptide.. Its function is as follows. Cleaves the N-terminal amino acid of tripeptides. This chain is Peptidase T, found in Clostridium botulinum (strain Kyoto / Type A2).